The sequence spans 323 residues: Beta-ketoacyl-[acyl-carrier-protein] synthase III (323 aa).

Residues cysteine 114 and histidine 250 contribute to the active site. Positions 251–255 are ACP-binding; sequence QANIR. The active site involves asparagine 280.

The protein belongs to the thiolase-like superfamily. FabH family. As to quaternary structure, homodimer.

It is found in the cytoplasm. It catalyses the reaction malonyl-[ACP] + acetyl-CoA + H(+) = 3-oxobutanoyl-[ACP] + CO2 + CoA. It functions in the pathway lipid metabolism; fatty acid biosynthesis. Its function is as follows. Catalyzes the condensation reaction of fatty acid synthesis by the addition to an acyl acceptor of two carbons from malonyl-ACP. Catalyzes the first condensation reaction which initiates fatty acid synthesis and may therefore play a role in governing the total rate of fatty acid production. Possesses both acetoacetyl-ACP synthase and acetyl transacylase activities. Its substrate specificity determines the biosynthesis of branched-chain and/or straight-chain of fatty acids. The protein is Beta-ketoacyl-[acyl-carrier-protein] synthase III of Alkalilimnicola ehrlichii (strain ATCC BAA-1101 / DSM 17681 / MLHE-1).